The sequence spans 180 residues: MAEKRNIFLVGPMGAGKSTIGRQLAQQLNMDFIDSDAVIEERTGADISWIFDLEGEDGFRKREERIINELTQMQGIVLSTGGGAVLSKENRNYLSARGIVIYLETTVEKQFQRTQRDKKRPLLQDAENPRQVLEDLAKIRNPLYEEIADITLPTDEQNAKIMVNQIVDLIDNMNGLNGTL.

An ATP-binding site is contributed by 14-19; sequence GAGKST. Ser-18 contributes to the Mg(2+) binding site. Substrate is bound by residues Asp-36, Arg-60, and Gly-82. Arg-120 lines the ATP pocket. Arg-140 is a substrate binding site. Gln-157 contacts ATP.

The protein belongs to the shikimate kinase family. As to quaternary structure, monomer. Mg(2+) is required as a cofactor.

The protein resides in the cytoplasm. The enzyme catalyses shikimate + ATP = 3-phosphoshikimate + ADP + H(+). It functions in the pathway metabolic intermediate biosynthesis; chorismate biosynthesis; chorismate from D-erythrose 4-phosphate and phosphoenolpyruvate: step 5/7. Its function is as follows. Catalyzes the specific phosphorylation of the 3-hydroxyl group of shikimic acid using ATP as a cosubstrate. In Haemophilus influenzae (strain PittEE), this protein is Shikimate kinase.